We begin with the raw amino-acid sequence, 427 residues long: MSVNNKQWYGLPLNLIWGYVAIAVFMTGDGFELAFLSHYIKALGFTPAQASFAFTLYGLAAALSAWVSGVVAEIITPRKAMLIGFVLWCVFHVLFLVFGLGRANYALILLFYGIRGLAYPLFLYSFIVAIIHNVRSDSSSSALGWFWAVYSVGIGVFGSYIPSFTIPHIGEMGTLWLALLFCATGGIIALVSMRHTETPRHMQNLTTREKFAELGRAATLLYTNRSILFSSIVRIINTLSLFGFAVIMPMMFVDELGFTTSEWLQVWAAFFFTTIFSNVFWGIVAEKMGWMKVIRWFGCIGMALSSLAFYYLPQHFGHNFAMALVPAIALGIFVAAFVPMAAVFPALEPNHKGAAISVYNLSAGLSNFLAPAIAVVLLPYFSTIGVVIAYTALYILAFFLCPLIRVEQPGFTSDQHAKPFTANAAES.

Residues 1–7 lie on the Cytoplasmic side of the membrane; that stretch reads MSVNNKQ. The chain crosses the membrane as a helical span at residues 8-28; the sequence is WYGLPLNLIWGYVAIAVFMTG. Residues 29–51 are Extracellular-facing; that stretch reads DGFELAFLSHYIKALGFTPAQAS. The helical transmembrane segment at 52-72 threads the bilayer; it reads FAFTLYGLAAALSAWVSGVVA. Topologically, residues 73 to 79 are cytoplasmic; that stretch reads EIITPRK. Residues 80 to 100 traverse the membrane as a helical segment; that stretch reads AMLIGFVLWCVFHVLFLVFGL. Over 101–107 the chain is Extracellular; that stretch reads GRANYAL. The helical transmembrane segment at 108–128 threads the bilayer; the sequence is ILLFYGIRGLAYPLFLYSFIV. Residues 129-141 are Cytoplasmic-facing; the sequence is AIIHNVRSDSSSS. Residues 142 to 162 traverse the membrane as a helical segment; the sequence is ALGWFWAVYSVGIGVFGSYIP. Residues 163 to 171 are Extracellular-facing; the sequence is SFTIPHIGE. A helical transmembrane segment spans residues 172–192; sequence MGTLWLALLFCATGGIIALVS. Topologically, residues 193 to 238 are cytoplasmic; that stretch reads MRHTETPRHMQNLTTREKFAELGRAATLLYTNRSILFSSIVRIINT. Residues 239–259 form a helical membrane-spanning segment; that stretch reads LSLFGFAVIMPMMFVDELGFT. Residues 260–263 are Extracellular-facing; sequence TSEW. Residues 264-284 form a helical membrane-spanning segment; sequence LQVWAAFFFTTIFSNVFWGIV. At 285–295 the chain is on the cytoplasmic side; the sequence is AEKMGWMKVIR. The helical transmembrane segment at 296-316 threads the bilayer; the sequence is WFGCIGMALSSLAFYYLPQHF. Residues 317-323 lie on the Extracellular side of the membrane; that stretch reads GHNFAMA. The chain crosses the membrane as a helical span at residues 324 to 344; the sequence is LVPAIALGIFVAAFVPMAAVF. Topologically, residues 345-360 are cytoplasmic; the sequence is PALEPNHKGAAISVYN. A helical transmembrane segment spans residues 361–381; sequence LSAGLSNFLAPAIAVVLLPYF. The Extracellular portion of the chain corresponds to 382 to 383; it reads ST. A helical transmembrane segment spans residues 384–404; the sequence is IGVVIAYTALYILAFFLCPLI. Residues 405-427 lie on the Cytoplasmic side of the membrane; sequence RVEQPGFTSDQHAKPFTANAAES.

It belongs to the major facilitator superfamily. Sugar transporter (TC 2.A.1.1) family. CsbX subfamily.

It is found in the cell membrane. The sequence is that of Ribitol transporter (rbtT) from Klebsiella pneumoniae.